The sequence spans 86 residues: Large ribosomal subunit protein uL24c (86 aa).

This sequence belongs to the universal ribosomal protein uL24 family. As to quaternary structure, part of the 50S ribosomal subunit.

The protein localises to the plastid. The protein resides in the chloroplast. One of two assembly initiator proteins, it binds directly to the 5'-end of the 23S rRNA, where it nucleates assembly of the 50S subunit. This is Large ribosomal subunit protein uL24c (rpl24) from Heterosigma akashiwo (strain NIES-293 / 8280G21-1).